Reading from the N-terminus, the 351-residue chain is Fe(3+) ions import ATP-binding protein FbpC (351 aa).

The ABC transporter domain occupies 9–239 (LVLKNINKTF…PNSLFLANFM (231 aa)). Residue 41–48 (GPSGCGKT) participates in ATP binding.

This sequence belongs to the ABC transporter superfamily. Fe(3+) ion importer (TC 3.A.1.10) family. The complex is composed of two ATP-binding proteins (FbpC), two transmembrane proteins (FbpB) and a solute-binding protein (FbpA).

Its subcellular location is the cell inner membrane. It catalyses the reaction Fe(3+)(out) + ATP + H2O = Fe(3+)(in) + ADP + phosphate + H(+). Functionally, part of the ABC transporter complex FbpABC involved in Fe(3+) ions import. Responsible for energy coupling to the transport system. In Mannheimia succiniciproducens (strain KCTC 0769BP / MBEL55E), this protein is Fe(3+) ions import ATP-binding protein FbpC.